The primary structure comprises 184 residues: Ribose 1,5-bisphosphate phosphokinase PhnN (184 aa).

ATP is bound at residue 11–18 (GPSGAGKD).

The protein belongs to the ribose 1,5-bisphosphokinase family.

It carries out the reaction alpha-D-ribose 1,5-bisphosphate + ATP = 5-phospho-alpha-D-ribose 1-diphosphate + ADP. Its pathway is metabolic intermediate biosynthesis; 5-phospho-alpha-D-ribose 1-diphosphate biosynthesis; 5-phospho-alpha-D-ribose 1-diphosphate from D-ribose 5-phosphate (route II): step 3/3. Its function is as follows. Catalyzes the phosphorylation of ribose 1,5-bisphosphate to 5-phospho-D-ribosyl alpha-1-diphosphate (PRPP). The chain is Ribose 1,5-bisphosphate phosphokinase PhnN from Burkholderia mallei (strain SAVP1).